Here is a 227-residue protein sequence, read N- to C-terminus: uncharacterized protein (227 aa).

This is an uncharacterized protein from Caenorhabditis elegans.